We begin with the raw amino-acid sequence, 245 residues long: Cysteine-rich secretory protein 3 (245 aa).

The first 22 residues, 1–22 (MALLPVLLFLAAVLLPFFPASG), serve as a signal peptide directing secretion. One can recognise an SCP domain in the interval 42 to 171 (VNKHNDLRRT…TLKYYYVCQY (130 aa)). Cystine bridges form between Cys191/Cys198, Cys194/Cys203, Cys207/Cys240, Cys216/Cys234, and Cys225/Cys238. The 34-residue stretch at 207–240 (CEYEDLVSNCDSLKKIAGCEHELLKENCKTTCQC) folds into the ShKT domain.

This sequence belongs to the CRISP family. In terms of assembly, interacts with A1BG. In terms of tissue distribution, expressed in the salivary gland, in the ampulla and the seminal vesicle.

The protein localises to the secreted. This chain is Cysteine-rich secretory protein 3 (CRISP3), found in Equus caballus (Horse).